The sequence spans 458 residues: Adenylosuccinate synthetase (458 aa).

GTP-binding positions include glycine 17 to lysine 23 and glycine 45 to threonine 47. The Proton acceptor role is filled by aspartate 18. The Mg(2+) site is built by aspartate 18 and glycine 45. IMP-binding positions include aspartate 18–lysine 21, asparagine 43–histidine 46, threonine 137, arginine 151, glutamine 247, threonine 262, and arginine 330. Histidine 46 acts as the Proton donor in catalysis. Valine 326–arginine 332 is a substrate binding site. GTP is bound by residues arginine 332, lysine 358–aspartate 360, and serine 440–serine 442.

It belongs to the adenylosuccinate synthetase family. As to quaternary structure, homodimer. Mg(2+) serves as cofactor.

The protein resides in the cytoplasm. The enzyme catalyses IMP + L-aspartate + GTP = N(6)-(1,2-dicarboxyethyl)-AMP + GDP + phosphate + 2 H(+). It functions in the pathway purine metabolism; AMP biosynthesis via de novo pathway; AMP from IMP: step 1/2. Its function is as follows. Plays an important role in the de novo pathway of purine nucleotide biosynthesis. Catalyzes the first committed step in the biosynthesis of AMP from IMP. The protein is Adenylosuccinate synthetase of Delftia acidovorans (strain DSM 14801 / SPH-1).